Consider the following 116-residue polypeptide: DNA-binding protein Tpen_0471 (116 aa).

The protein belongs to the PDCD5 family.

The protein is DNA-binding protein Tpen_0471 of Thermofilum pendens (strain DSM 2475 / Hrk 5).